Here is a 147-residue protein sequence, read N- to C-terminus: Large ribosomal subunit protein uL13 (147 aa).

Belongs to the universal ribosomal protein uL13 family. As to quaternary structure, part of the 50S ribosomal subunit.

Functionally, this protein is one of the early assembly proteins of the 50S ribosomal subunit, although it is not seen to bind rRNA by itself. It is important during the early stages of 50S assembly. In Pseudarthrobacter chlorophenolicus (strain ATCC 700700 / DSM 12829 / CIP 107037 / JCM 12360 / KCTC 9906 / NCIMB 13794 / A6) (Arthrobacter chlorophenolicus), this protein is Large ribosomal subunit protein uL13.